The sequence spans 146 residues: MLALIQRVTRASVTVDDQIVGQIGPGLLALIGVEPGDSDAQIRRLAERLLSYRVFGDDAGKMNRSLADTGGGLLLVSQFTLAADTSSGNRPGFSTAAPPLEAEPAFNRLAAICREKHRGGVETGRFGAHMVVDLVNDGPVTFLLRP.

The Gly-cisPro motif, important for rejection of L-amino acids motif lies at 138-139 (GP).

Belongs to the DTD family. Homodimer.

It is found in the cytoplasm. The enzyme catalyses glycyl-tRNA(Ala) + H2O = tRNA(Ala) + glycine + H(+). It carries out the reaction a D-aminoacyl-tRNA + H2O = a tRNA + a D-alpha-amino acid + H(+). Functionally, an aminoacyl-tRNA editing enzyme that deacylates mischarged D-aminoacyl-tRNAs. Also deacylates mischarged glycyl-tRNA(Ala), protecting cells against glycine mischarging by AlaRS. Acts via tRNA-based rather than protein-based catalysis; rejects L-amino acids rather than detecting D-amino acids in the active site. By recycling D-aminoacyl-tRNA to D-amino acids and free tRNA molecules, this enzyme counteracts the toxicity associated with the formation of D-aminoacyl-tRNA entities in vivo and helps enforce protein L-homochirality. This is D-aminoacyl-tRNA deacylase from Xanthomonas axonopodis pv. citri (strain 306).